A 434-amino-acid chain; its full sequence is Bcl-2-like protein 13 (434 aa).

Residues 14 to 30 (ETKYVVLSYLGLLSQEK) carry the BH4 motif. A Phosphoserine modification is found at Ser35. The BH3 motif lies at 97–113 (IEDCLAHLGERVSQDLK). The BH1 signature appears at 144-154 (ASGWNKLLVPL). Residues 190-203 (FIIQQGGWGSVFSL) carry the BH2 motif. Residues 224-245 (LPSDNSGQVSPPESPTVTTSWQ) are disordered. Residues 226 to 245 (SDNSGQVSPPESPTVTTSWQ) show a composition bias toward polar residues. An A repeat occupies 243-253 (SWQSESLPVSL). Phosphoserine occurs at positions 256, 258, 300, 343, 347, 377, and 387. One copy of the A; approximate repeat lies at 258–268 (SWHTESLPVSL). The disordered stretch occupies residues 282-303 (EVKSLDSSGAGEKSENNSSNSD). The tract at residues 363-398 (RPEAVERAEGAAQLSEERAGSRKKSHTGEAAAVRGA) is disordered. Residues 365–382 (EAVERAEGAAQLSEERAG) are compositionally biased toward basic and acidic residues. The helical transmembrane segment at 409-429 (VLLFGGAAAVAILAVAVGVAL) threads the bilayer.

Belongs to the Bcl-2 family. In terms of assembly, monomer.

It is found in the mitochondrion membrane. Functionally, may promote the activation of caspase-3 and apoptosis. The chain is Bcl-2-like protein 13 (Bcl2l13) from Mus musculus (Mouse).